A 230-amino-acid chain; its full sequence is 2-C-methyl-D-erythritol 4-phosphate cytidylyltransferase (230 aa).

Belongs to the IspD/TarI cytidylyltransferase family. IspD subfamily.

The catalysed reaction is 2-C-methyl-D-erythritol 4-phosphate + CTP + H(+) = 4-CDP-2-C-methyl-D-erythritol + diphosphate. Its pathway is isoprenoid biosynthesis; isopentenyl diphosphate biosynthesis via DXP pathway; isopentenyl diphosphate from 1-deoxy-D-xylulose 5-phosphate: step 2/6. In terms of biological role, catalyzes the formation of 4-diphosphocytidyl-2-C-methyl-D-erythritol from CTP and 2-C-methyl-D-erythritol 4-phosphate (MEP). This is 2-C-methyl-D-erythritol 4-phosphate cytidylyltransferase from Synechocystis sp. (strain ATCC 27184 / PCC 6803 / Kazusa).